The following is a 316-amino-acid chain: Probable peptidyl-tRNA hydrolase 2 (316 aa).

The segment at 1–127 (MSENIPDIDP…SHPVDPQEPN (127 aa)) is disordered. Residues 44–53 (PTPSSVTVDN) show a composition bias toward polar residues. Positions 75–89 (IPEVPIPSSAISISS) are enriched in low complexity. A UBA domain is found at 128 to 169 (EVNNEYLAHLLDLGFDEYTAVLALKRTNSAGVEQAVAWIVER). Residues 170-193 (SNESDFDEDSSSSENEADEEMGAV) form a disordered region. The span at 173–190 (SDFDEDSSSSENEADEEM) shows a compositional bias: acidic residues.

The protein belongs to the PTH2 family.

It carries out the reaction an N-acyl-L-alpha-aminoacyl-tRNA + H2O = an N-acyl-L-amino acid + a tRNA + H(+). Its function is as follows. The natural substrate for this enzyme may be peptidyl-tRNAs which drop off the ribosome during protein synthesis. The chain is Probable peptidyl-tRNA hydrolase 2 from Caenorhabditis elegans.